Here is a 478-residue protein sequence, read N- to C-terminus: MSRFSGALQLTDLDDFITPSQECIKPVKIETNKSKTGSKITIQDDGSYMQATSSGLQKLEKVEITLADCLACSGCITSAEGVLITQQSQEELLKVMNENNLAKLNNQLDSVRYIVFTVAQQPILSLAKRYNLGPEETFERVAGYFKKLGADMVVDTKIADDLSLIESRNEFVERFNTNRQSMPMMASSCPGWVCYAEKTHGNFILPFIATTRSPQQIMGVLVKKYLAKILGVPGDRIYHVTVMPCYDKKLEASREDFFSDVDNCRDVDCVITSIEIEQMLDGTGIQFLQTVEPSPIDWPWPTPRPSAFVWAHESSGSGGYSEYIFKYAARKLFNINIDQAEFKILRNNDLREAILEINGEVLLRFAIANGFRNIQNMVQKLKRGKCNYHFIEIMACPSGCLNGGAQVRPNSGQTPRELTAELEAMYKMLPQSNPENEAVEMVYTTFLDNAGDNNKRKEFLHTSYHQIEKMNTALNIKW.

C23, C69, C72, C75, C189, C245, C396, and C400 together coordinate [4Fe-4S] cluster.

It belongs to the NARF family.

Its function is as follows. Component of the cytosolic iron-sulfur (Fe/S) protein assembly machinery. Required for maturation of extramitochondrial Fe/S proteins. The sequence is that of Probable cytosolic Fe-S cluster assembly factor AAEL012261 from Aedes aegypti (Yellowfever mosquito).